We begin with the raw amino-acid sequence, 134 residues long: ATP synthase epsilon chain (134 aa).

Residues 94 to 104 show a composition bias toward basic and acidic residues; the sequence is AKLAKSRAESH. Positions 94–115 are disordered; the sequence is AKLAKSRAESHLEEDDDNTDIN.

Belongs to the ATPase epsilon chain family. In terms of assembly, F-type ATPases have 2 components, CF(1) - the catalytic core - and CF(0) - the membrane proton channel. CF(1) has five subunits: alpha(3), beta(3), gamma(1), delta(1), epsilon(1). CF(0) has three main subunits: a, b and c.

Its subcellular location is the cell membrane. Its function is as follows. Produces ATP from ADP in the presence of a proton gradient across the membrane. The sequence is that of ATP synthase epsilon chain from Staphylococcus epidermidis (strain ATCC 35984 / DSM 28319 / BCRC 17069 / CCUG 31568 / BM 3577 / RP62A).